The chain runs to 118 residues: UPF0295 protein BCG9842_B4782 (118 aa).

Helical transmembrane passes span 12-32 (IRTF…LGVF) and 43-63 (FMMV…WIGM).

It belongs to the UPF0295 family.

Its subcellular location is the cell membrane. This Bacillus cereus (strain G9842) protein is UPF0295 protein BCG9842_B4782.